A 1004-amino-acid polypeptide reads, in one-letter code: Centriolar coiled-coil protein of 110 kDa (1004 aa).

The tract at residues 1–221 (MEEYEEFCEK…SCLAEVTPDP (221 aa)) is CEP97 binding. A coiled-coil region spans residues 51-90 (EKRKKIQEEKQKALDVQSRKQANRKKALLTRVQEILENVQ). The interval 64–82 (LDVQSRKQANRKKALLTRV) is calmodulin-binding. The segment at 67–82 (QSRKQANRKKALLTRV) is required for interaction with CEP290. Disordered stretches follow at residues 147–194 (PVNN…SSAS) and 239–279 (RELS…APPM). Ser170 bears the Phosphoserine mark. The segment covering 243-252 (SRSLRNSLKR) has biased composition (low complexity). Residues 253–276 (SVNETHSDRENDAAKASDCVKEKA) show a composition bias toward basic and acidic residues. An interaction with CEP76 region spans residues 349-564 (ENKVKSLKGP…QTQTSRQQMD (216 aa)). Residues Ser364, Ser370, and Ser398 each carry the phosphoserine modification. The tract at residues 401 to 433 (GKEEAVDRTAPAAAETTNESETVPKSPTDLTGV) is disordered. Over residues 415 to 433 (ETTNESETVPKSPTDLTGV) the composition is skewed to polar residues. Phosphoserine is present on Ser550. A coiled-coil region spans residues 641–699 (QELLKSKMLAFEEMRKRLEEQHAQQLSLLIAEQEREQEQLQKEIEEQEKMLKEKAVTTD). 2 calmodulin-binding regions span residues 773-813 (GRAQ…DKLK) and 901-916 (VALS…RKKF). The tract at residues 955-1004 (LSRQGTPKTSVKGVVQNRQKPSQSRVPNRAPVSGAYAGKTQRKRPNVATI) is disordered. The segment covering 970 to 980 (QNRQKPSQSRV) has biased composition (polar residues). Residues 994–1004 (TQRKRPNVATI) show a composition bias toward basic residues.

As to quaternary structure, interacts with CALM1, CETN2, CEP76, CEP104, CEP290 and TALPID3. Interacts with CEP97. Seems to associate with discrete CETN2, CEP97 and CEP290-containing complexes. Interacts with NEURL4 and CCNF; these interactions are not mutually exclusive and both lead to CCP110 ubiquitination and proteasome-dependent degradation. Via its interaction with NEURL4, may indirectly interact with HERC2. Interacts with KIF24, leading to its recruitment to centrioles. Interacts with USP20 and USP33. Interacts with MPHOSPH9. Interacts (via N-terminal region) with ENKD1 (via central region); ENKD1 competes with CEP97 for binding to CCP110, destabilizing the interaction between CP110 and CEP97 which promotes the removal of CCP110 and CEP97 from the mother centriole and allows the initiation of ciliogenesis. Phosphorylated by CDKs. Post-translationally, ubiquitinated by the SCF(CCNF) during G2 phase, leading to its degradation by the proteasome and preventing centrosome reduplication. Deubiquitinated by USP33 in S and G2/M phase, leading to stabilize CCP110 during the period which centrioles duplicate and elongate. Ubiquitinated by the EDVP complex, leading to its degradation.

It is found in the cytoplasm. Its subcellular location is the cytoskeleton. The protein resides in the microtubule organizing center. It localises to the centrosome. The protein localises to the centriole. It is found in the cilium basal body. Its function is as follows. Necessary for centrosome duplication at different stages of procentriole formation. Acts as a key negative regulator of ciliogenesis in collaboration with CEP97 by capping the mother centriole thereby preventing cilia formation. Also involved in promoting ciliogenesis. May play a role in the assembly of the mother centriole subdistal appendages (SDA) thereby effecting the fusion of recycling endosomes to basal bodies during cilia formation. Required for correct spindle formation and has a role in regulating cytokinesis and genome stability via cooperation with CALM1 and CETN2. The protein is Centriolar coiled-coil protein of 110 kDa (Ccp110) of Mus musculus (Mouse).